Reading from the N-terminus, the 464-residue chain is ATP synthase subunit beta (464 aa).

Position 153–160 (153–160 (GGAGVGKT)) interacts with ATP.

Belongs to the ATPase alpha/beta chains family. In terms of assembly, F-type ATPases have 2 components, CF(1) - the catalytic core - and CF(0) - the membrane proton channel. CF(1) has five subunits: alpha(3), beta(3), gamma(1), delta(1), epsilon(1). CF(0) has three main subunits: a(1), b(2) and c(9-12). The alpha and beta chains form an alternating ring which encloses part of the gamma chain. CF(1) is attached to CF(0) by a central stalk formed by the gamma and epsilon chains, while a peripheral stalk is formed by the delta and b chains.

The protein resides in the cell inner membrane. It carries out the reaction ATP + H2O + 4 H(+)(in) = ADP + phosphate + 5 H(+)(out). Functionally, produces ATP from ADP in the presence of a proton gradient across the membrane. The catalytic sites are hosted primarily by the beta subunits. In Burkholderia ambifaria (strain ATCC BAA-244 / DSM 16087 / CCUG 44356 / LMG 19182 / AMMD) (Burkholderia cepacia (strain AMMD)), this protein is ATP synthase subunit beta.